The sequence spans 350 residues: MFNIASAPFAHNRKQTQTLMLLVILACLPGFLAQSWFFGWGTLIQILLALVTALGSEALVLRLRGRPVKPALLDGSAALTAVLIGLSLPPLLPWWMLVLGTAFAIIIAKHLYGGLGQNLFNPAMVAYVLLLVSFPVQMTSWLPPSSIAAYDIGFGDAASVIFTGFSLDGYSMAQLKQGVDGLTMATPLDTLKTGLTQGLTAGEVMTHTVFEGWGGIGWSWVNLGYLLGGLFLLQQKVINWRIPGAILGSLLLAATLGYLMTPDATATPMFHLFSGATMLGAFFIATDPVSASTTPRGRLVYGVLIGVLVYVIRRFGGYPDAFAFAVLLANLCVPLIDSLTRPKVYGARRK.

The next 5 helical transmembrane spans lie at 19-39 (LMLL…WFFG), 41-61 (GTLI…ALVL), 67-87 (PVKP…IGLS), 88-108 (LPPL…IIIA), and 122-142 (PAMV…TSWL). FMN phosphoryl threonine is present on Thr186. 4 helical membrane passes run 213-233 (WGGI…LFLL), 242-262 (IPGA…LMTP), 264-284 (ATAT…AFFI), and 299-316 (LVYG…RRFG).

The protein belongs to the NqrB/RnfD family. In terms of assembly, the complex is composed of six subunits: RnfA, RnfB, RnfC, RnfD, RnfE and RnfG. FMN is required as a cofactor.

Its subcellular location is the cell inner membrane. Part of a membrane-bound complex that couples electron transfer with translocation of ions across the membrane. The protein is Ion-translocating oxidoreductase complex subunit D of Aeromonas hydrophila subsp. hydrophila (strain ATCC 7966 / DSM 30187 / BCRC 13018 / CCUG 14551 / JCM 1027 / KCTC 2358 / NCIMB 9240 / NCTC 8049).